The sequence spans 869 residues: Dynamin-3 (869 aa).

Residues 28–294 (LLELPQIAVV…LTNHIRDTLP (267 aa)) form the Dynamin-type G domain. Residues 38 to 45 (GGQSAGKS) form a G1 motif region. 38 to 46 (GGQSAGKSS) is a GTP binding site. Residues 64 to 66 (VTR) form a G2 motif region. Positions 136 to 139 (DLPG) are G3 motif. The interval 205–208 (TKLD) is G4 motif. 205–211 (TKLDLMD) contacts GTP. Tyr-231 is subject to Phosphotyrosine. The G5 motif stretch occupies residues 235-238 (VNRS). GTP is bound at residue 236-239 (NRSQ). An N6-acetyllysine modification is found at Lys-299. The region spanning 525–631 (IVIRKGWLTV…WKASLLRAGV (107 aa)) is the PH domain. Tyr-603 is modified (phosphotyrosine). Lys-604 carries the N6-acetyllysine modification. The region spanning 659–750 (VETIRNLVDS…IIGDINTVTV (92 aa)) is the GED domain. The segment at 752–869 (TPAPPPVDDS…IRPLESSLLD (118 aa)) is disordered. A phosphoserine mark is found at Ser-769 and Ser-773. Low complexity predominate over residues 775–796 (TTQRRLTLSAPLPRPASSRGPA). Pro residues-rich tracts occupy residues 797-822 (PAIP…PPFP) and 832-855 (PQVP…PSPT). Phosphoserine is present on Ser-853.

The protein belongs to the TRAFAC class dynamin-like GTPase superfamily. Dynamin/Fzo/YdjA family. Isoform-specific expression in germ-cell-depleted testis (Sertoli cells), brain (peripheral sensory neurons), lung and heart.

The protein localises to the cytoplasm. The protein resides in the cytoskeleton. It is found in the cytoplasmic vesicle. Its subcellular location is the golgi apparatus. It carries out the reaction GTP + H2O = GDP + phosphate + H(+). Microtubule-associated force-producing protein involved in producing microtubule bundles and able to bind and hydrolyze GTP. Most probably involved in vesicular trafficking processes, in particular endocytosis. In Rattus norvegicus (Rat), this protein is Dynamin-3 (Dnm3).